The primary structure comprises 484 residues: MAKFTPASLPAEFLDTMRDIMPSSLSMEDFIAACQRPLRRSIRVNTLKISVDAFLQLAQPYGWQLEPIPWCQEGFWLLNAEEENTRLGNTLEHLSGLFYIQEASSMLPASALFHHNDAPGTILDVAAAPGSKTTQIAARLNNEGAIVANEYSASRVKVLHANISRCGVSNTAITHFDGRVFGAALPEYFDAILLDAPCSGEGVVRKDPAAMSHWSQESITDIAATQRDLILSAFHALKPGGVMIYSTCTLNRQENQQVCRWLQAQFPDACEFESLDDLFAGAERATTEEGFLHVFPQIYDSEGFFVARLRKTGSVPPLPRPGYKVGKFPFSPVAHKDRALLTEAARKQGIRWDEELLQLWQRDSEVWLFPAALTSAFGNIKFSRIGIKLAERFPKGFRWQHEAIVALADPNASNAYALNDRIACEWFQGKDSYPEPLPTADELILTYQNTPVGLAKRISSRIKNSLPRDLVRDGASSARPLAKE.

S-adenosyl-L-methionine-binding positions include 126 to 132 (AAAPGSK), glutamate 150, aspartate 177, and aspartate 195. Cysteine 248 acts as the Nucleophile in catalysis.

This sequence belongs to the class I-like SAM-binding methyltransferase superfamily. RsmB/NOP family.

The protein localises to the cytoplasm. It carries out the reaction cytidine(1407) in 16S rRNA + S-adenosyl-L-methionine = 5-methylcytidine(1407) in 16S rRNA + S-adenosyl-L-homocysteine + H(+). Specifically methylates the cytosine at position 1407 (m5C1407) of 16S rRNA. In Pectobacterium atrosepticum (strain SCRI 1043 / ATCC BAA-672) (Erwinia carotovora subsp. atroseptica), this protein is Ribosomal RNA small subunit methyltransferase F.